The following is a 116-amino-acid chain: Protein Rev (116 aa).

At Ser8 the chain carries Phosphoserine; by host CK2. Residues 18–26 (IIKILYQSN) form a homomultimerization region. Disordered regions lie at residues 25–49 (SNPY…RARQ) and 82–116 (SLNC…GDKE). The Nuclear localization signal and RNA-binding (RRE) motif lies at 34–50 (TRQARRNRRRRWRARQR). Over residues 36 to 49 (QARRNRRRRWRARQ) the composition is skewed to basic residues. The Nuclear export signal and binding to XPO1 signature appears at 73-84 (LQLPPLERLSLN). At Ser99 the chain carries Phosphoserine; by host.

It belongs to the HIV-1 REV protein family. In terms of assembly, homomultimer; when bound to the RRE. Multimeric assembly is essential for activity and may involve XPO1. Binds to human KPNB1, XPO1, TNPO1, RANBP5 and IPO7. Interacts with the viral Integrase. Interacts with human KHDRBS1. Interacts with human NAP1; this interaction decreases Rev multimerization and stimulates its activity. Interacts with human DEAD-box helicases DDX3 and DDX24; these interactions may serve for viral RNA export to the cytoplasm and packaging, respectively. Interacts with human PSIP1; this interaction may inhibit HIV-1 DNA integration by promoting dissociation of the Integrase-LEDGF/p75 complex. Asymmetrically arginine dimethylated at one site by host PRMT6. Methylation impairs the RNA-binding activity and export of viral RNA from the nucleus to the cytoplasm. Post-translationally, phosphorylated by protein kinase CK2. Presence of, and maybe binding to the N-terminus of the regulatory beta subunit of CK2 is necessary for CK2-mediated Rev's phosphorylation.

It localises to the host nucleus. The protein localises to the host nucleolus. It is found in the host cytoplasm. In terms of biological role, escorts unspliced or incompletely spliced viral pre-mRNAs (late transcripts) out of the nucleus of infected cells. These pre-mRNAs carry a recognition sequence called Rev responsive element (RRE) located in the env gene, that is not present in fully spliced viral mRNAs (early transcripts). This function is essential since most viral proteins are translated from unspliced or partially spliced pre-mRNAs which cannot exit the nucleus by the pathway used by fully processed cellular mRNAs. Rev itself is translated from a fully spliced mRNA that readily exits the nucleus. Rev's nuclear localization signal (NLS) binds directly to KPNB1/Importin beta-1 without previous binding to KPNA1/Importin alpha-1. KPNB1 binds to the GDP bound form of RAN (Ran-GDP) and targets Rev to the nucleus. In the nucleus, the conversion from Ran-GDP to Ran-GTP dissociates Rev from KPNB1 and allows Rev's binding to the RRE in viral pre-mRNAs. Rev multimerization on the RRE via cooperative assembly exposes its nuclear export signal (NES) to the surface. Rev can then form a complex with XPO1/CRM1 and Ran-GTP, leading to nuclear export of the complex. Conversion from Ran-GTP to Ran-GDP mediates dissociation of the Rev/RRE/XPO1/RAN complex, so that Rev can return to the nucleus for a subsequent round of export. Beside KPNB1, also seems to interact with TNPO1/Transportin-1, RANBP5/IPO5 and IPO7/RANBP7 for nuclear import. The nucleoporin-like HRB/RIP is an essential cofactor that probably indirectly interacts with Rev to release HIV RNAs from the perinuclear region to the cytoplasm. This is Protein Rev from Human immunodeficiency virus type 1 group M subtype K (isolate 97ZR-EQTB11) (HIV-1).